We begin with the raw amino-acid sequence, 203 residues long: Putative 3-methyladenine DNA glycosylase (203 aa).

Belongs to the DNA glycosylase MPG family.

This chain is Putative 3-methyladenine DNA glycosylase, found in Clostridium botulinum (strain Langeland / NCTC 10281 / Type F).